A 273-amino-acid polypeptide reads, in one-letter code: Hemin import ATP-binding protein HmuV (273 aa).

Residues 2–256 (LTAHHLDVAR…AHIAQCYGFA (255 aa)) form the ABC transporter domain. 34 to 41 (GRNGAGKS) lines the ATP pocket.

This sequence belongs to the ABC transporter superfamily. Heme (hemin) importer (TC 3.A.1.14.5) family. In terms of assembly, the complex is composed of two ATP-binding proteins (HmuV), two transmembrane proteins (HmuU) and a solute-binding protein (HmuT).

Its subcellular location is the cell inner membrane. Its function is as follows. Part of the ABC transporter complex HmuTUV involved in hemin import. Responsible for energy coupling to the transport system. In Burkholderia ambifaria (strain ATCC BAA-244 / DSM 16087 / CCUG 44356 / LMG 19182 / AMMD) (Burkholderia cepacia (strain AMMD)), this protein is Hemin import ATP-binding protein HmuV.